The following is a 184-amino-acid chain: Mediator of RNA polymerase II transcription subunit 28 (184 aa).

Residues 77-105 (LLKEENFDLKQEIARKDELIRKHYEKIES) are a coiled coil.

It belongs to the Mediator complex subunit 28 family. Component of the Mediator complex.

Its subcellular location is the nucleus. Functionally, component of the Mediator complex, a coactivator involved in the regulated transcription of nearly all RNA polymerase II-dependent genes. Mediator functions as a bridge to convey information from gene-specific regulatory proteins to the basal RNA polymerase II transcription machinery. Mediator is recruited to promoters by direct interactions with regulatory proteins and serves as a scaffold for the assembly of a functional preinitiation complex with RNA polymerase II and the general transcription factors. The polypeptide is Mediator of RNA polymerase II transcription subunit 28 (MED28) (Aedes aegypti (Yellowfever mosquito)).